The primary structure comprises 257 residues: tRNA dimethylallyltransferase (257 aa).

Residue 15–22 (GPTASGKS) participates in ATP binding. 17–22 (TASGKS) lines the substrate pocket.

Belongs to the IPP transferase family. Monomer. Mg(2+) is required as a cofactor.

The catalysed reaction is adenosine(37) in tRNA + dimethylallyl diphosphate = N(6)-dimethylallyladenosine(37) in tRNA + diphosphate. Catalyzes the transfer of a dimethylallyl group onto the adenine at position 37 in tRNAs that read codons beginning with uridine, leading to the formation of N6-(dimethylallyl)adenosine (i(6)A). This Oenococcus oeni (strain ATCC BAA-331 / PSU-1) protein is tRNA dimethylallyltransferase.